We begin with the raw amino-acid sequence, 207 residues long: Large ribosomal subunit protein uL4 (207 aa).

Residues 44-78 (QRQGTHDVKNRSEVRGGGRKPWRQKGTGRARQGSI) are disordered. The segment covering 47–59 (GTHDVKNRSEVRG) has biased composition (basic and acidic residues). Residues 60–71 (GGRKPWRQKGTG) are compositionally biased toward basic residues.

The protein belongs to the universal ribosomal protein uL4 family. As to quaternary structure, part of the 50S ribosomal subunit.

Functionally, one of the primary rRNA binding proteins, this protein initially binds near the 5'-end of the 23S rRNA. It is important during the early stages of 50S assembly. It makes multiple contacts with different domains of the 23S rRNA in the assembled 50S subunit and ribosome. Its function is as follows. Forms part of the polypeptide exit tunnel. In Brevibacillus brevis (strain 47 / JCM 6285 / NBRC 100599), this protein is Large ribosomal subunit protein uL4.